The sequence spans 610 residues: DEAD-box ATP-dependent RNA helicase 9, mitochondrial (610 aa).

The transit peptide at 1–66 (MISTVLRRSI…SSPFGVKVRD (66 aa)) directs the protein to the mitochondrion. Residues 116-144 (LAIADLGISPEIVKALKGRGIEKLFPIQK) carry the Q motif motif. The region spanning 147-321 (LEPAMEGRDM…KKYLNNPLTI (175 aa)) is the Helicase ATP-binding domain. 160–167 (ARTGTGKT) lines the ATP pocket. Positions 269 to 272 (DEAD) match the DEAD box motif. The region spanning 350–494 (IIGPLVKEHG…ELPSIAVERG (145 aa)) is the Helicase C-terminal domain. A compositionally biased stretch (gly residues) spans 542-557 (SGRSGGGGGSYGGSGG). Residues 542-610 (SGRSGGGGGS…FGSNDGKRSY (69 aa)) are disordered. The span at 558–572 (SSSRYSGGSDRSSGF) shows a compositional bias: low complexity. Gly residues predominate over residues 573–585 (GSFGSGGSSGGFG). Residues 586–596 (SDRSSQSSGRS) show a composition bias toward low complexity.

This sequence belongs to the DEAD box helicase family. DDX21/DDX50 subfamily.

It localises to the mitochondrion. It catalyses the reaction ATP + H2O = ADP + phosphate + H(+). The sequence is that of DEAD-box ATP-dependent RNA helicase 9, mitochondrial (RH9) from Arabidopsis thaliana (Mouse-ear cress).